A 287-amino-acid polypeptide reads, in one-letter code: Cyclopropane mycolic acid synthase MmaA2 (287 aa).

S-adenosyl-L-methionine contacts are provided by residues 33–34, 72–74, 94–99, 123–124, and Ile136; these read YS, GCG, TLSKNQ, and WE. Cys269 is a catalytic residue.

It belongs to the CFA/CMAS family.

The enzyme catalyses a 1-acyl-2-(9Z)-enoyl-sn-glycero-3-phospholipid + S-adenosyl-L-methionine = a 1-acyl-2-(9-cyclopronane)-acyl-sn-glycero-3-phospholipid + S-adenosyl-L-homocysteine + H(+). It participates in lipid metabolism; mycolic acid biosynthesis. Catalyzes the conversion of a double bond to a cis cyclopropane ring at the distal position of an alpha mycolic acid via the transfer of a methylene group from S-adenosyl-L-methionine. MmaA2 also catalyzes the biosynthesis of the cis-cyclopropanated methoxymycolates. Cyclopropanated mycolic acids are key factors participating in cell envelope permeability, host immunomodulation and persistence. The chain is Cyclopropane mycolic acid synthase MmaA2 (cmaC) from Mycobacterium bovis (strain ATCC BAA-935 / AF2122/97).